We begin with the raw amino-acid sequence, 549 residues long: Arginine--tRNA ligase (549 aa).

Positions 132-142 (ANPTGPLHIGH) match the 'HIGH' region motif.

The protein belongs to the class-I aminoacyl-tRNA synthetase family. In terms of assembly, monomer.

It is found in the cytoplasm. The enzyme catalyses tRNA(Arg) + L-arginine + ATP = L-arginyl-tRNA(Arg) + AMP + diphosphate. This is Arginine--tRNA ligase from Paenarthrobacter aurescens (strain TC1).